A 61-amino-acid chain; its full sequence is Large ribosomal subunit protein bL28 (61 aa).

This sequence belongs to the bacterial ribosomal protein bL28 family.

The protein is Large ribosomal subunit protein bL28 (rpmB) of Geobacillus stearothermophilus (Bacillus stearothermophilus).